Consider the following 413-residue polypeptide: DNA polymerase IV 1 (413 aa).

The UmuC domain maps to 7–188 (IFHVDMNSFY…LPIEEMYGIG (182 aa)). Positions 11 and 107 each coordinate Mg(2+). The active site involves Glu108.

This sequence belongs to the DNA polymerase type-Y family. In terms of assembly, monomer. The cofactor is Mg(2+).

It localises to the cytoplasm. The enzyme catalyses DNA(n) + a 2'-deoxyribonucleoside 5'-triphosphate = DNA(n+1) + diphosphate. Its function is as follows. Poorly processive, error-prone DNA polymerase involved in untargeted mutagenesis. Copies undamaged DNA at stalled replication forks, which arise in vivo from mismatched or misaligned primer ends. These misaligned primers can be extended by PolIV. Exhibits no 3'-5' exonuclease (proofreading) activity. May be involved in translesional synthesis, in conjunction with the beta clamp from PolIII. The polypeptide is DNA polymerase IV 1 (dinB1) (Halalkalibacterium halodurans (strain ATCC BAA-125 / DSM 18197 / FERM 7344 / JCM 9153 / C-125) (Bacillus halodurans)).